Consider the following 193-residue polypeptide: Pyridoxal 5'-phosphate synthase subunit PdxT (193 aa).

50-52 (GES) lines the L-glutamine pocket. C82 functions as the Nucleophile in the catalytic mechanism. L-glutamine is bound by residues R109 and 136–137 (IR). Catalysis depends on charge relay system residues H172 and E174.

This sequence belongs to the glutaminase PdxT/SNO family. In the presence of PdxS, forms a dodecamer of heterodimers. Only shows activity in the heterodimer.

The catalysed reaction is aldehydo-D-ribose 5-phosphate + D-glyceraldehyde 3-phosphate + L-glutamine = pyridoxal 5'-phosphate + L-glutamate + phosphate + 3 H2O + H(+). The enzyme catalyses L-glutamine + H2O = L-glutamate + NH4(+). It functions in the pathway cofactor biosynthesis; pyridoxal 5'-phosphate biosynthesis. Its function is as follows. Catalyzes the hydrolysis of glutamine to glutamate and ammonia as part of the biosynthesis of pyridoxal 5'-phosphate. The resulting ammonia molecule is channeled to the active site of PdxS. In Streptococcus pneumoniae (strain JJA), this protein is Pyridoxal 5'-phosphate synthase subunit PdxT.